A 111-amino-acid polypeptide reads, in one-letter code: Nucleoid-associated protein CYA_1369 (111 aa).

It belongs to the YbaB/EbfC family. As to quaternary structure, homodimer.

Its subcellular location is the cytoplasm. The protein resides in the nucleoid. Its function is as follows. Binds to DNA and alters its conformation. May be involved in regulation of gene expression, nucleoid organization and DNA protection. This is Nucleoid-associated protein CYA_1369 from Synechococcus sp. (strain JA-3-3Ab) (Cyanobacteria bacterium Yellowstone A-Prime).